A 250-amino-acid polypeptide reads, in one-letter code: Lymphotoxin-beta (250 aa).

Residues 1 to 26 (MGAPGLETRAGGPNGKSYLLLASVGA) are Cytoplasmic-facing. A helical; Signal-anchor for type II membrane protein transmembrane segment spans residues 27-47 (AVLGTLLLSVPITVLTVLALM). The Extracellular segment spans residues 48–250 (PQEQGGQVAD…KTFFGAVMVG (203 aa)). One can recognise a THD domain in the interval 87-249 (PAAHLIGIAK…GKTFFGAVMV (163 aa)). The N-linked (GlcNAc...) asparagine glycan is linked to asparagine 228.

Belongs to the tumor necrosis factor family. Heterotrimer of either two LTB and one LTA subunits or (less prevalent) two LTA and one LTB subunits.

It is found in the membrane. Cytokine that binds to LTBR/TNFRSF3. May play a specific role in immune response regulation. Provides the membrane anchor for the attachment of the heterotrimeric complex to the cell surface. This is Lymphotoxin-beta (LTB) from Notamacropus eugenii (Tammar wallaby).